The primary structure comprises 490 residues: Cytochrome P450 2C38 (490 aa).

A signal peptide spans 1–20; that stretch reads MDLVTFLVLTLSSLILLSLW. Cysteine 435 lines the heme pocket.

The protein belongs to the cytochrome P450 family. It depends on heme as a cofactor. Liver, brain, kidney, and intestine, with trace amounts in lung and heart.

The protein localises to the endoplasmic reticulum membrane. It is found in the microsome membrane. The enzyme catalyses an organic molecule + reduced [NADPH--hemoprotein reductase] + O2 = an alcohol + oxidized [NADPH--hemoprotein reductase] + H2O + H(+). It carries out the reaction (5Z,8Z,11Z,14Z)-eicosatetraenoate + reduced [NADPH--hemoprotein reductase] + O2 = 11,12-epoxy-(5Z,8Z,14Z)-eicosatrienoate + oxidized [NADPH--hemoprotein reductase] + H2O + H(+). It functions in the pathway lipid metabolism; arachidonate metabolism. A cytochrome P450 monooxygenase that primarily catalyzes the epoxidation of 11,12 double bond of (5Z,8Z,11Z,14Z)-eicosatetraenoic acid (arachidonate) forming 11,12-epoxyeicosatrienoic acid (11,12-EET) regioisomer. Mechanistically, uses molecular oxygen inserting one oxygen atom into a substrate, and reducing the second into a water molecule, with two electrons provided by NADPH via cytochrome P450 reductase (CPR; NADPH--hemoprotein reductase). The chain is Cytochrome P450 2C38 from Mus musculus (Mouse).